Here is a 165-residue protein sequence, read N- to C-terminus: Ubiquitin-conjugating enzyme E2 G2 (165 aa).

An N-acetylalanine modification is found at alanine 2. The 161-residue stretch at 4-164 folds into the UBC core domain; the sequence is TALKRLMAEY…AKQIVQKSLG (161 aa). The Glycyl thioester intermediate role is filled by cysteine 89.

The protein belongs to the ubiquitin-conjugating enzyme family. In terms of assembly, interacts with AUP1 (via C-terminus); the interaction recruits UBE2G2 to lipid droplets. Interacts with ubiquitin ligases AMFR/gp78 and RNF139/TRC8; recruitment to lipid droplets by AUP1 facilitates interaction of UBE2G2 with AMFR and RNF139, leading to sterol-induced ubiquitination of 3-hydroxy-3-methylglutaryl coenzyme A reductase and its subsequent proteasomal degradation.

Its subcellular location is the endoplasmic reticulum. It localises to the lipid droplet. The enzyme catalyses S-ubiquitinyl-[E1 ubiquitin-activating enzyme]-L-cysteine + [E2 ubiquitin-conjugating enzyme]-L-cysteine = [E1 ubiquitin-activating enzyme]-L-cysteine + S-ubiquitinyl-[E2 ubiquitin-conjugating enzyme]-L-cysteine.. It functions in the pathway protein modification; protein ubiquitination. Functionally, accepts ubiquitin from the E1 complex and catalyzes its covalent attachment to other proteins. In vitro catalyzes 'Lys-48'-linked polyubiquitination. Involved in endoplasmic reticulum-associated degradation (ERAD). Required for sterol-induced ubiquitination of 3-hydroxy-3-methylglutaryl coenzyme A reductase and its subsequent proteasomal degradation. This chain is Ubiquitin-conjugating enzyme E2 G2, found in Bos taurus (Bovine).